The primary structure comprises 711 residues: DNA topoisomerase 1 (711 aa).

In terms of domain architecture, Toprim spans 3–134 (KNLVVIESPN…KCQRITFNEI (132 aa)). Mg(2+) contacts are provided by Glu9 and Asp102. One can recognise a Topo IA-type catalytic domain in the interval 150 to 604 (DQSWVQSQFA…FWSNFKEEVK (455 aa)). The interval 183-188 (SAGRVQ) is interaction with DNA. Tyr340 serves as the catalytic O-(5'-phospho-DNA)-tyrosine intermediate. 2 C4-type zinc fingers span residues 624–652 (CPSCASPLLYRYTKRGNEKFVGCSNFPNC) and 673–702 (CPECNSQLVKRRTKFNPNKTFVGCSNFPRC).

It belongs to the type IA topoisomerase family. In terms of assembly, monomer. Mg(2+) is required as a cofactor.

It catalyses the reaction ATP-independent breakage of single-stranded DNA, followed by passage and rejoining.. Its function is as follows. Releases the supercoiling and torsional tension of DNA, which is introduced during the DNA replication and transcription, by transiently cleaving and rejoining one strand of the DNA duplex. Introduces a single-strand break via transesterification at a target site in duplex DNA. The scissile phosphodiester is attacked by the catalytic tyrosine of the enzyme, resulting in the formation of a DNA-(5'-phosphotyrosyl)-enzyme intermediate and the expulsion of a 3'-OH DNA strand. The free DNA strand then undergoes passage around the unbroken strand, thus removing DNA supercoils. Finally, in the religation step, the DNA 3'-OH attacks the covalent intermediate to expel the active-site tyrosine and restore the DNA phosphodiester backbone. This is DNA topoisomerase 1 from Mycoplasma pneumoniae (strain ATCC 29342 / M129 / Subtype 1) (Mycoplasmoides pneumoniae).